Consider the following 484-residue polypeptide: Cysteine--tRNA ligase (484 aa).

Cys27 lines the Zn(2+) pocket. Positions 29–39 match the 'HIGH' region motif; the sequence is PTTYNYIHLGN. Positions 207, 232, and 236 each coordinate Zn(2+). Positions 264-268 match the 'KMSKS' region motif; the sequence is KMSKS. Lys267 provides a ligand contact to ATP.

It belongs to the class-I aminoacyl-tRNA synthetase family. In terms of assembly, monomer. The cofactor is Zn(2+).

Its subcellular location is the cytoplasm. It catalyses the reaction tRNA(Cys) + L-cysteine + ATP = L-cysteinyl-tRNA(Cys) + AMP + diphosphate. The sequence is that of Cysteine--tRNA ligase from Pelotomaculum thermopropionicum (strain DSM 13744 / JCM 10971 / SI).